A 104-amino-acid chain; its full sequence is Large ribosomal subunit protein uL24 (104 aa).

Belongs to the universal ribosomal protein uL24 family. Part of the 50S ribosomal subunit.

Functionally, one of two assembly initiator proteins, it binds directly to the 5'-end of the 23S rRNA, where it nucleates assembly of the 50S subunit. In terms of biological role, one of the proteins that surrounds the polypeptide exit tunnel on the outside of the subunit. The sequence is that of Large ribosomal subunit protein uL24 from Pseudomonas fluorescens (strain ATCC BAA-477 / NRRL B-23932 / Pf-5).